The primary structure comprises 432 residues: 5-hydroxybenzimidazole synthase BzaA (432 aa).

Residues Met95, Tyr124, His163, 185–187 (SYG), and 226–229 (DGMR) each bind substrate. His269 contacts Zn(2+). Phe292 contributes to the substrate binding site. His333 lines the Zn(2+) pocket. Residues Cys409, Cys412, and Cys416 each contribute to the [4Fe-4S] cluster site.

This sequence belongs to the ThiC family. 5-hydroxybenzimidazole synthase subfamily. [4Fe-4S] cluster is required as a cofactor.

It catalyses the reaction 5-amino-1-(5-phospho-beta-D-ribosyl)imidazole + AH2 + S-adenosyl-L-methionine = 5-hydroxybenzimidazole + 5'-deoxyadenosine + formate + L-methionine + A + NH4(+) + phosphate + 2 H(+). In terms of biological role, together with BzaB, probably catalyzes the conversion of aminoimidazole ribotide (AIR) to 5-hydroxybenzimidazole (5-HBI) in a radical S-adenosyl-L-methionine (SAM)-dependent reaction. Is thus involved in the anaerobic biosynthesis of the benzimidazole lower axial ligand of the cobamide produced by M.thermoacetica. Requires BzaB for catalytic activity, as BzaA alone displays no activity. In Moorella thermoacetica (strain ATCC 39073 / JCM 9320), this protein is 5-hydroxybenzimidazole synthase BzaA.